The chain runs to 301 residues: GTP cyclohydrolase FolE2 (301 aa).

It belongs to the GTP cyclohydrolase IV family.

It catalyses the reaction GTP + H2O = 7,8-dihydroneopterin 3'-triphosphate + formate + H(+). It functions in the pathway cofactor biosynthesis; 7,8-dihydroneopterin triphosphate biosynthesis; 7,8-dihydroneopterin triphosphate from GTP: step 1/1. Functionally, converts GTP to 7,8-dihydroneopterin triphosphate. This Pseudomonas syringae pv. tomato (strain ATCC BAA-871 / DC3000) protein is GTP cyclohydrolase FolE2.